Here is a 363-residue protein sequence, read N- to C-terminus: Chorismate synthase (363 aa).

2 residues coordinate NADP(+): Arg-48 and Arg-54. FMN is bound by residues 125-127 (RSS), 237-238 (NA), Gly-277, 292-296 (KPTSS), and Arg-318.

The protein belongs to the chorismate synthase family. As to quaternary structure, homotetramer. The cofactor is FMNH2.

It catalyses the reaction 5-O-(1-carboxyvinyl)-3-phosphoshikimate = chorismate + phosphate. Its pathway is metabolic intermediate biosynthesis; chorismate biosynthesis; chorismate from D-erythrose 4-phosphate and phosphoenolpyruvate: step 7/7. Catalyzes the anti-1,4-elimination of the C-3 phosphate and the C-6 proR hydrogen from 5-enolpyruvylshikimate-3-phosphate (EPSP) to yield chorismate, which is the branch point compound that serves as the starting substrate for the three terminal pathways of aromatic amino acid biosynthesis. This reaction introduces a second double bond into the aromatic ring system. The polypeptide is Chorismate synthase (Ectopseudomonas mendocina (strain ymp) (Pseudomonas mendocina)).